A 237-amino-acid chain; its full sequence is Derlin-2 (237 aa).

Topologically, residues 1–20 are cytoplasmic; sequence MNGVVAALEEMPPVTRFYTG. Residues 21–41 traverse the membrane as a helical segment; the sequence is ACVLLTTAVHLEFVTPFHLYF. The Lumenal segment spans residues 42-54; sequence NWELIIRKYQFWR. The helical transmembrane segment at 55-75 threads the bilayer; it reads LITSFCFFGSFGFSFLFNMIF. At 76–97 the chain is on the cytoplasmic side; the sequence is TYRYCMMLEEGSFRGRRADFVY. A helical transmembrane segment spans residues 98–118; the sequence is MFLFGAVLMILSGIFVQILFL. The Lumenal portion of the chain corresponds to 119-166; it reads GQAFTIMLVYIWSRRNPMIQMNFFGVLTFTAPYLPWVLLLFSLLLGNN. Residues 167-187 form a helical membrane-spanning segment; the sequence is AVVDFMGIACGHIYFFLEDVF. Topologically, residues 188 to 237 are cytoplasmic; it reads PFQEHGKRFLKTPQWLVYLFDERRPEPLPEDERPGGFEWGDEQPEQEQHD. Basic and acidic residues predominate over residues 212 to 222; that stretch reads PEPLPEDERPG. The disordered stretch occupies residues 212–237; that stretch reads PEPLPEDERPGGFEWGDEQPEQEQHD. Acidic residues predominate over residues 226-237; the sequence is WGDEQPEQEQHD.

Belongs to the derlin family.

The protein resides in the endoplasmic reticulum membrane. Its function is as follows. May be required for the degradation process of some specific misfolded endoplasmic reticulum (ER) luminal proteins. Participates in the transfer of misfolded proteins from the ER to the cytosol, where they are destroyed by the proteasome in a ubiquitin-dependent manner. Its precise function remains unclear, but its ability to complement der1 mutations in C.cerevisiae, suggests a similar function in the degradation of ER misfolded proteins. The chain is Derlin-2 from Caenorhabditis elegans.